Here is a 487-residue protein sequence, read N- to C-terminus: GTPase Der (487 aa).

EngA-type G domains follow at residues Pro3–Leu166 and Val201–Thr374. GTP-binding positions include Gly9–Ser16, Asp56–Ile60, Asn118–Asp121, Gly207–Ser214, Asp254–Val258, and Asn319–Asp322. Positions Lys375 to Asp459 constitute a KH-like domain.

It belongs to the TRAFAC class TrmE-Era-EngA-EngB-Septin-like GTPase superfamily. EngA (Der) GTPase family. In terms of assembly, associates with the 50S ribosomal subunit.

GTPase that plays an essential role in the late steps of ribosome biogenesis. The chain is GTPase Der from Pseudoalteromonas translucida (strain TAC 125).